The following is a 308-amino-acid chain: Homeobox protein abdominal-A homolog (308 aa).

The segment at residues 138–197 (RRRGRQTYTRFQTLELEKEFHFNHYLTRRRRIEIAHALCLTERQIKIWFQNRRMKLKKEL) is a DNA-binding region (homeobox). Residues 207-221 (ARREREEQDKMKNES) show a composition bias toward basic and acidic residues. The interval 207–277 (ARREREEQDK…SGNLGSHLHH (71 aa)) is disordered. The segment covering 223–247 (KSAQQHHSQKQAQQEHTVVGSQQTS) has biased composition (low complexity). A compositionally biased stretch (gly residues) spans 248–269 (NGGGTGGGTGGSGGAGSGGSSG).

Belongs to the Antp homeobox family.

It is found in the nucleus. Its function is as follows. Sequence-specific transcription factor which is part of a developmental regulatory system that provides cells with specific positional identities on the anterior-posterior axis. This Anopheles gambiae (African malaria mosquito) protein is Homeobox protein abdominal-A homolog.